A 680-amino-acid polypeptide reads, in one-letter code: Protein FAR1-RELATED SEQUENCE 11 (680 aa).

The interval 1-36 is disordered; sequence MSDDPGQMLLIYDDPSDQRSLSLDDASSTEESPDDN. An FAR1 domain is found at 62–156; that stretch reads EFYSTFAKRC…ANHHNHELLE (95 aa). In terms of domain architecture, MULE spans 277–373; the sequence is AVVFDTTHRL…CIWMVVGKFP (97 aa). An SWIM-type zinc finger spans residues 556–589; sequence YWVPQEGIISCSCQLFEFSGFLCRHALRVLSTGN.

The protein belongs to the FHY3/FAR1 family. As to expression, expressed in hypocotyls, rosette and cauline leaves, inflorescences stems, flowers and siliques.

The protein resides in the nucleus. Putative transcription activator involved in regulating light control of development. This is Protein FAR1-RELATED SEQUENCE 11 (FRS11) from Arabidopsis thaliana (Mouse-ear cress).